Here is a 549-residue protein sequence, read N- to C-terminus: Mitogen-activated protein kinase 15 (549 aa).

Positions 1–20 are ubiquitin-conjugating; that stretch reads MCAAEVDRHVAQRYLIKRRL. Residues 14–305 enclose the Protein kinase domain; the sequence is YLIKRRLGKG…AEQALQHPYV (292 aa). Residues 20-28 and Lys43 each bind ATP; that span reads LGKGAYGIV. Asp138 serves as the catalytic Proton acceptor. Thr176 is subject to Phosphothreonine. The TXY signature appears at 176–178; that stretch reads TEY. Phosphotyrosine is present on Tyr178. The necessary to interact with ESRRA, to regulate its subcellular localization and to inhibit its transcriptional activity stretch occupies residues 266-286; the sequence is LDALLPPDTPPEALDLLKRLL. The segment at 301–382 is requires for interaction with GABARAP, MAP1LC3B AND GABARAPL1; the sequence is QHPYVQRFHC…ARTQSLKSGV (82 aa). The segment at 370 to 507 is disordered; the sequence is ASPARTQSLK…PEPRPGRRMF (138 aa). PXXXP motif repeat units follow at residues 380–384 and 387–391; these read SGVLP and PAETP. 2 PXXXP motif; regulates binding with chromatin and interaction with PCNA repeats span residues 395–399 and 403–407; these read RGPKP and PGHDP. The span at 403–416 shows a compositional bias: basic and acidic residues; sequence PGHDPEHVEVRRQS. Arg451 carries the omega-N-methylarginine modification. The segment covering 456-467 has biased composition (polar residues); sequence SLTSQAEAQAAN. Positions 483–492 are enriched in low complexity; sequence AVGARRVPSR. Over residues 493–502 the composition is skewed to basic and acidic residues; it reads LPREAPEPRP.

Belongs to the protein kinase superfamily. CMGC Ser/Thr protein kinase family. MAP kinase subfamily. As to quaternary structure, interacts with TGFB1I1. Interacts with CSK/c-Src, ABL1 and RET. Interacts with GABARAP, MAP1LC3B and GABARAPL1; controls, in a kinase-dependent fashion, both basal and starvation-induced autophagy. Interacts with ESRRA; promotes re-localization of ESRRA to the cytoplasm through a XPO1-dependent mechanism then inhibits ESRRA transcriptional activity. Interacts with PCNA; the interaction is chromatin binding- and kinase activity-dependent and prevents MDM2-mediated PCNA destruction by inhibiting the association of PCNA with MDM2. Interacts with DVL2. Interacts with CLIC3; MAPK15 does not phosphorylates CLIC3. Post-translationally, autophosphorylated on Thr-176 and Tyr-178; activates the enzyme. Ubiquitinated. Ubiquitination may allow its tight kinase activity regulation and rapid turnover. May be ubiquitinated by a SCF E3 ligase. Expressed at all stages of oocyte meiotic maturation.

It is found in the cytoplasm. The protein localises to the cytoskeleton. It localises to the cilium basal body. Its subcellular location is the cell junction. The protein resides in the tight junction. It is found in the microtubule organizing center. The protein localises to the centrosome. It localises to the centriole. Its subcellular location is the cytoplasmic vesicle. The protein resides in the autophagosome. It is found in the golgi apparatus. The protein localises to the nucleus. It localises to the spindle. The enzyme catalyses L-seryl-[protein] + ATP = O-phospho-L-seryl-[protein] + ADP + H(+). The catalysed reaction is L-threonyl-[protein] + ATP = O-phospho-L-threonyl-[protein] + ADP + H(+). With respect to regulation, activated by threonine and tyrosine phosphorylation. Inhibited by dual specificity phosphatases, such as DUSP1. Phosphorylation and activation in response to DNA damaging agents, serum stimulation. Constitutively activated when phosphorylated on Tyr-178. Activity depends on the relative rates of MAPK15 autophosphorylation and dephosphorylation by PTPN1. Its function is as follows. Atypical MAPK protein that regulates several process such as autophagy, ciliogenesis, protein trafficking/secretion and genome integrity, in a kinase activity-dependent manner. Controls both, basal and starvation-induced autophagy throught its interaction with GABARAP, MAP1LC3B and GABARAPL1 leading to autophagosome formation, SQSTM1 degradation and reduced MAP1LC3B inhibitory phosphorylation. Regulates primary cilium formation and the localization of ciliary proteins involved in cilium structure, transport, and signaling. Prevents the relocation of the sugar-adding enzymes from the Golgi to the endoplasmic reticulum, thereby restricting the production of sugar-coated proteins. Upon amino-acid starvation, mediates transitional endoplasmic reticulum site disassembly and inhibition of secretion. Binds to chromatin leading to MAPK15 activation and interaction with PCNA, that which protects genomic integrity by inhibiting MDM2-mediated degradation of PCNA. Regulates DA transporter (DAT) activity and protein expression via activation of RhoA. In response to H(2)O(2) treatment phosphorylates ELAVL1, thus preventing it from binding to the PDCD4 3'UTR and rendering the PDCD4 mRNA accessible to miR-21 and leading to its degradation and loss of protein expression. Also functions in a kinase activity-independent manner as a negative regulator of growth. Phosphorylates in vitro FOS and MBP. During oocyte maturation, plays a key role in the microtubule organization and meiotic cell cycle progression in oocytes, fertilized eggs, and early embryos. Interacts with ESRRA promoting its re-localization from the nucleus to the cytoplasm and then prevents its transcriptional activity. This chain is Mitogen-activated protein kinase 15, found in Mus musculus (Mouse).